Reading from the N-terminus, the 265-residue chain is uncharacterized protein (265 aa).

Residues 143–205 (ATQKALKDSI…EKLIKSVEKA (63 aa)) are a coiled coil.

This is an uncharacterized protein from Aquifex aeolicus (strain VF5).